The following is a 161-amino-acid chain: Ribonuclease H (161 aa).

Residues Thr-2–Asn-141 form the RNase H type-1 domain. Asp-11, Glu-46, Asp-69, and Asp-133 together coordinate Mg(2+).

The protein belongs to the RNase H family. In terms of assembly, monomer. The cofactor is Mg(2+).

The protein resides in the cytoplasm. It carries out the reaction Endonucleolytic cleavage to 5'-phosphomonoester.. Functionally, endonuclease that specifically degrades the RNA of RNA-DNA hybrids. This is Ribonuclease H from Tropheryma whipplei (strain TW08/27) (Whipple's bacillus).